The chain runs to 657 residues: Pyoverdine export ATP-binding/permease protein PvdT (657 aa).

The region spanning 6 to 245 (IDLQDIRKSY…ASTNPGALQA (240 aa)) is the ABC transporter domain. 43 to 50 (GASGSGKS) serves as a coordination point for ATP. 4 helical membrane passes run 285–305 (ALTL…LAVG), 539–559 (IAAI…LMTV), 590–610 (LSVV…GVLI), and 620–640 (LVAI…FGFM).

The protein belongs to the ABC transporter superfamily. Macrolide exporter (TC 3.A.1.122) family. Part of the tripartite efflux system PvdRT-OpmQ, which is composed of an inner membrane component with both ATPase and permease domains, PvdT, a periplasmic membrane fusion protein, PvdR, and an outer membrane component, OpmQ.

The protein resides in the cell inner membrane. Its function is as follows. Part of the tripartite efflux system PvdRT-OpmQ required for the secretion into the extracellular milieu of the siderophore pyoverdine (PVD), which is involved in iron acquisition. This subunit binds PVD and drives its secretion by hydrolyzing ATP. The system is responsible for export of newly synthesized PVD after the final steps of biosynthesis have taken place in the periplasm. It is also responsible for recycling of PVD after internalization of ferri-PVD into the periplasm by the outer-membrane receptor FpvA and release of iron from PVD, thus making PVD available for new cycles of iron uptake. The protein is Pyoverdine export ATP-binding/permease protein PvdT of Pseudomonas fluorescens (strain Pf0-1).